A 471-amino-acid polypeptide reads, in one-letter code: NALCN channel auxiliary factor 2 (471 aa).

The chain crosses the membrane as a helical span at residues 47-67 (LASLLFFTVLLADHLWLCAGA). A disordered region spans residues 76–115 (SAMRPPWGAGRERQPVPPRAVLPPPPPSPGEPSASSGTCG). Residues 90 to 105 (PVPPRAVLPPPPPSPG) are compositionally biased toward pro residues. An N-linked (GlcNAc...) asparagine glycan is attached at asparagine 120. 2 disordered regions span residues 158-178 (EPTTPAPPLRPPDSPSRAPEF) and 399-424 (HYHPRHEPPSRVSNKPSLLPVSGGSR). Residues 161–171 (TPAPPLRPPDS) show a composition bias toward pro residues. A helical transmembrane segment spans residues 432–452 (LCVLVLILLHTVVSFSSSQSG).

Belongs to the NALF family.

It localises to the membrane. Functionally, probable component of the NALCN channel complex, a channel that regulates the resting membrane potential and controls neuronal excitability. The chain is NALCN channel auxiliary factor 2 (Nalf2) from Mus musculus (Mouse).